The primary structure comprises 36 residues: Thrombin (36 aa).

The Peptidase S1 domain occupies I19–L36.

Belongs to the peptidase S1 family. As to quaternary structure, forms a heterodimer with SERPINA5. The gamma-carboxyglutamyl residues, which bind calcium ions, result from the carboxylation of glutamyl residues by a microsomal enzyme, the vitamin K-dependent carboxylase. The modified residues are necessary for the calcium-dependent interaction with a negatively charged phospholipid surface, which is essential for the conversion of prothrombin to thrombin. In terms of processing, N-glycosylated. As to expression, expressed by the liver and secreted in plasma.

The protein resides in the secreted. The enzyme catalyses Selective cleavage of Arg-|-Gly bonds in fibrinogen to form fibrin and release fibrinopeptides A and B.. With respect to regulation, inhibited by SERPINA5. In terms of biological role, thrombin, which cleaves bonds after Arg and Lys, converts fibrinogen to fibrin and activates factors V, VII, VIII, XIII, and, in complex with thrombomodulin, protein C. Functions in blood homeostasis, inflammation and wound healing. This is Thrombin from Salmo salar (Atlantic salmon).